A 468-amino-acid chain; its full sequence is MSSGKIAQVIGPVVDVLFAAGEKLPEINNALVVYKNDERKTKIVLEVALELGDGMVRTISMESTDGLTRGMEVLDTGRPISVPVGKETLGRVFNVLGDTIDLEAPFTEDAERQPIHKKAPTFDELSTSSEILETGIKVIDLLAPYLKGGKVGLFGGAGVGKTVLIQELIHNIAQEHGGISVFTGVGERTREGNDLYWEMKESGVIEKTAMVFGQMNEPPGARMRVALTGLTIAEYFRDVEGQDVLLFIDNIFRFTQAGSEVSALLGRMPSAVGYQPTLATEMGQLQERITSTKKGSVTSIQAIYVPADDYTDPAPATAFAHLDSTTNLERKLVQLGIYPAVDPLASSSRALAPEIVGEEHYAVAAEVKRVLQRYHELQDIIAILGMDELSDEEKTLVARARRIQFFLSQNFNVAEQFTGQPGSYVPVAETVRGFKEILDGKYDHLPEDAFRGVGSIEDVIAKAEKMGF.

155–162 is a binding site for ATP; sequence GGAGVGKT.

It belongs to the ATPase alpha/beta chains family. As to quaternary structure, F-type ATPases have 2 components, CF(1) - the catalytic core - and CF(0) - the membrane proton channel. CF(1) has five subunits: alpha(3), beta(3), gamma(1), delta(1), epsilon(1). CF(0) has three main subunits: a(1), b(2) and c(9-12). The alpha and beta chains form an alternating ring which encloses part of the gamma chain. CF(1) is attached to CF(0) by a central stalk formed by the gamma and epsilon chains, while a peripheral stalk is formed by the delta and b chains.

Its subcellular location is the cell membrane. It catalyses the reaction ATP + H2O + 4 H(+)(in) = ADP + phosphate + 5 H(+)(out). In terms of biological role, produces ATP from ADP in the presence of a proton gradient across the membrane. The catalytic sites are hosted primarily by the beta subunits. This chain is ATP synthase subunit beta, found in Streptococcus pneumoniae (strain Taiwan19F-14).